A 1026-amino-acid polypeptide reads, in one-letter code: Multidrug resistance protein MdtC (1026 aa).

A run of 12 helical transmembrane segments spans residues Val-12–Leu-32, Glu-333–Leu-353, Ala-360–Cys-380, Leu-387–Leu-407, Val-431–Leu-451, Phe-463–Pro-483, Trp-528–Pro-548, Leu-853–Ser-873, Val-875–Leu-895, Trp-897–Val-917, Pro-953–Gly-973, and Ile-984–Val-1004.

It belongs to the resistance-nodulation-cell division (RND) (TC 2.A.6) family. MdtC subfamily. In terms of assembly, part of a tripartite efflux system composed of MdtA, MdtB and MdtC. MdtC forms a heteromultimer with MdtB.

The protein localises to the cell inner membrane. In Pectobacterium carotovorum subsp. carotovorum (strain PC1), this protein is Multidrug resistance protein MdtC.